The primary structure comprises 330 residues: DNA-directed RNA polymerase subunit alpha (330 aa).

The alpha N-terminal domain (alpha-NTD) stretch occupies residues 1 to 236 (MQNSVIEFLK…EQLEAFIDLR (236 aa)). The tract at residues 250–330 (FDPILLRLVD…NWPPTNILDN (81 aa)) is alpha C-terminal domain (alpha-CTD).

This sequence belongs to the RNA polymerase alpha chain family. In terms of assembly, homodimer. The RNAP catalytic core consists of 2 alpha, 1 beta, 1 beta' and 1 omega subunit. When a sigma factor is associated with the core the holoenzyme is formed, which can initiate transcription.

It catalyses the reaction RNA(n) + a ribonucleoside 5'-triphosphate = RNA(n+1) + diphosphate. In terms of biological role, DNA-dependent RNA polymerase catalyzes the transcription of DNA into RNA using the four ribonucleoside triphosphates as substrates. In Blochmanniella pennsylvanica (strain BPEN), this protein is DNA-directed RNA polymerase subunit alpha.